Here is a 148-residue protein sequence, read N- to C-terminus: Endoribonuclease YbeY (148 aa).

Zn(2+) is bound by residues His113, His117, and His123.

The protein belongs to the endoribonuclease YbeY family. The cofactor is Zn(2+).

Its subcellular location is the cytoplasm. Its function is as follows. Single strand-specific metallo-endoribonuclease involved in late-stage 70S ribosome quality control and in maturation of the 3' terminus of the 16S rRNA. This chain is Endoribonuclease YbeY, found in Borrelia turicatae (strain 91E135).